A 312-amino-acid chain; its full sequence is Ribosomal protein L11 methyltransferase (312 aa).

S-adenosyl-L-methionine is bound by residues Thr162, Gly183, Asp205, and Asn248.

The protein belongs to the methyltransferase superfamily. PrmA family.

It localises to the cytoplasm. It carries out the reaction L-lysyl-[protein] + 3 S-adenosyl-L-methionine = N(6),N(6),N(6)-trimethyl-L-lysyl-[protein] + 3 S-adenosyl-L-homocysteine + 3 H(+). Its function is as follows. Methylates ribosomal protein L11. This Bacillus anthracis (strain A0248) protein is Ribosomal protein L11 methyltransferase.